Consider the following 425-residue polypeptide: Synaptotagmin-4 (425 aa).

Residues 1 to 16 lie on the Vesicular side of the membrane; that stretch reads MAPITTSRVEFDEIPT. Residues 17-37 form a helical membrane-spanning segment; the sequence is VVGIFSAFGLVFTVSLFAWIC. The Cytoplasmic segment spans residues 38-425; it reads CQRRSAKSNK…IAKWHMLCDG (388 aa). Disordered regions lie at residues 102 to 121 and 126 to 147; these read NGNFPKTNPKAGSSSDLENV and FPETEKEAVSPESLKSSTSLTS. Polar residues predominate over residues 105-119; the sequence is FPKTNPKAGSSSDLE. Position 135 is a phosphoserine; by MAPK8 (Ser-135). The segment covering 137–146 has biased composition (low complexity); that stretch reads ESLKSSTSLT. C2 domains lie at 153–274 and 287–420; these read KLGT…MLMT and GRGE…AKWH. Ca(2+) is bound by residues Asp-246, Ser-249, and Asp-252.

Belongs to the synaptotagmin family. In terms of assembly, interacts with KIF1A; the interaction increases in presence of calcium and decreases when SYT4 is phosphorylated at Ser-135. Ca(2+) is required as a cofactor. Post-translationally, phosphorylation at Ser-135 by MAPK8/JNK1 reduces interaction with KIF1A and neuronal dense core vesicles mobility. In terms of tissue distribution, widely expressed. Expressed in the brain. Expressed in pituitary gland, cerebellum, cortex, hypothalamus and hippocampus.

The protein resides in the cytoplasmic vesicle. It is found in the secretory vesicle. Its subcellular location is the neuronal dense core vesicle membrane. In terms of biological role, synaptotagmin family member which does not bind Ca(2+). Involved in neuronal dense core vesicles (DCVs) mobility through its interaction with KIF1A. Upon increased neuronal activity, phosphorylation by MAPK8/JNK1 destabilizes the interaction with KIF1A and captures DCVs to synapses. Plays a role in dendrite formation by melanocytes. This Rattus norvegicus (Rat) protein is Synaptotagmin-4 (Syt4).